The primary structure comprises 314 residues: Olfactory receptor 8U9 (314 aa).

Topologically, residues Met1–Met25 are extracellular. N-linked (GlcNAc...) asparagine glycosylation is present at Asn5. The helical transmembrane segment at Pro26–Ile46 threads the bilayer. Residues Leu47–Arg54 lie on the Cytoplasmic side of the membrane. Residues Leu55–Ser75 traverse the membrane as a helical segment. At Val76–Ala99 the chain is on the extracellular side. A disulfide bridge links Cys97 with Cys189. Residues Gln100–Tyr120 traverse the membrane as a helical segment. The Cytoplasmic segment spans residues Asp121–Met133. A helical transmembrane segment spans residues Val134 to Leu154. Residues Val155 to Gln196 are Extracellular-facing. The helical transmembrane segment at Leu197–Ser217 threads the bilayer. Residues Tyr218 to Ala237 lie on the Cytoplasmic side of the membrane. Residues Phe238–Met258 form a helical membrane-spanning segment. Over Tyr259 to Asp271 the chain is Extracellular. N-linked (GlcNAc...) asparagine glycosylation occurs at Asn265. A helical membrane pass occupies residues Lys272–Leu292. Residues Arg293–Ser314 lie on the Cytoplasmic side of the membrane.

Belongs to the G-protein coupled receptor 1 family.

Its subcellular location is the cell membrane. Potential odorant receptor. The chain is Olfactory receptor 8U9 from Mus musculus (Mouse).